The primary structure comprises 144 residues: Large ribosomal subunit protein uL15 (144 aa).

Positions 1-58 (MQLNDLRSAPGARREKLRPGRGIGSGLGKTGGRGHKGQTSRSGGKIAPGFEGGQQPLH) are disordered. Over residues 21 to 31 (RGIGSGLGKTG) the composition is skewed to gly residues.

This sequence belongs to the universal ribosomal protein uL15 family. Part of the 50S ribosomal subunit.

Binds to the 23S rRNA. This is Large ribosomal subunit protein uL15 from Azotobacter vinelandii (strain DJ / ATCC BAA-1303).